The following is an 885-amino-acid chain: Envelope glycoprotein B (885 aa).

The signal sequence occupies residues 1-34 (MRPRGTPPSFLPLPVLLALAVIAAAGRAAPAAAA). A compositionally biased stretch (low complexity) spans 29–46 (APAAAAAPTADPAATPAL). Residues 29–74 (APAAAAAPTADPAATPALPEDEEVPDEDGEGVATPAPAANASVEAG) form a disordered region. At 35–759 (APTADPAATP…SGVSSFLSNP (725 aa)) the chain is on the virion surface side. Residues 47–58 (PEDEEVPDEDGE) are compositionally biased toward acidic residues. 2 N-linked (GlcNAc...) asparagine; by host glycosylation sites follow: asparagine 68 and asparagine 122. Intrachain disulfides connect cysteine 97-cysteine 558, cysteine 114-cysteine 514, cysteine 188-cysteine 252, cysteine 345-cysteine 393, and cysteine 581-cysteine 618. 2 involved in fusion and/or binding to host membrane regions span residues 154–160 (VWFGHRY) and 239–246 (RVEAFHRY). Residues asparagine 379 and asparagine 411 are each glycosylated (N-linked (GlcNAc...) asparagine; by host). The segment at 455–478 (RRPAGGDPGEAATPGPSVDPPSVE) is disordered. The N-linked (GlcNAc...) asparagine; by host glycan is linked to asparagine 659. Hydrophobic membrane proximal region regions lie at residues 704 to 757 (IDTV…SFLS) and 716 to 756 (LFAG…SSFL). The chain crosses the membrane as a helical span at residues 760–780 (FGALAVGLLVLAGLAAAFFAF). Residues 781 to 885 (RYVMRLQRNP…PLRDTDEEEL (105 aa)) are Intravirion-facing. The short motif at 834-837 (YMAL) is the Golgi targeting element. The tract at residues 866–885 (MRKRARPRYSPLRDTDEEEL) is disordered. Positions 874 to 877 (YSPL) match the Internalization motif motif.

Belongs to the herpesviridae glycoprotein B family. In terms of assembly, homotrimer; disulfide-linked. Binds to heparan sulfate proteoglycans. Interacts with gH/gL heterodimer.

The protein resides in the virion membrane. It localises to the host cell membrane. Its subcellular location is the host endosome membrane. The protein localises to the host Golgi apparatus membrane. In terms of biological role, envelope glycoprotein that forms spikes at the surface of virion envelope. Essential for the initial attachment to heparan sulfate moieties of the host cell surface proteoglycans. Involved in fusion of viral and cellular membranes leading to virus entry into the host cell. Following initial binding to its host receptors, membrane fusion is mediated by the fusion machinery composed at least of gB and the heterodimer gH/gL. May be involved in the fusion between the virion envelope and the outer nuclear membrane during virion egress. The chain is Envelope glycoprotein B from Herpes simplex virus type 2 (strain SA8) (Simian agent 8).